The following is a 529-amino-acid chain: Listeriolysin O (529 aa).

Positions 1 to 24 (MKKIMLVFITLILISLPIAQQTEA) are cleaved as a signal peptide. Residues 35 to 54 (SISSMAPPASPPASPKTPIE) form a disordered region. Beta stranded transmembrane passes span 214–227 (ESQL…AFKA), 234–243 (VNFGAISEGK), 312–321 (STKVKAAFDA), and 329–341 (SGDV…IKNS). The Conserved undecapeptide signature appears at 483–493 (ECTGLAWEWWR). Residues 515–516 (TL) carry the Cholesterol binding motif.

It belongs to the cholesterol-dependent cytolysin family. Homooligomeric pore complex of 35 to 50 subunits; when inserted in the host membrane.

The protein localises to the secreted. Its subcellular location is the host membrane. It is found in the host cell membrane. With respect to regulation, activity of listeriolysin O is regulated on multiple levels. It should be high in the phagosome, thereby allowing escape of the bacteria from the phagosomal compartment. Then, once inside the host cytosol, the activity must be controlled to prevent lysis of the host plasma membrane and loss of the intracellular environment. Its function is as follows. A cholesterol-dependent toxin that causes cytolysis by forming pores in cholesterol containing host membranes. After binding to target membranes, the protein undergoes a major conformation change, leading to its insertion in the host membrane and formation of an oligomeric pore complex. Cholesterol is required for binding to host membranes, membrane insertion and pore formation; cholesterol binding is mediated by a Thr-Leu pair in the C-terminus. Acts as a major virulence factor required for the escape of bacteria from phagosomal vacuoles and entry into the host cytosol. Can be reversibly inactivated by oxidation. The chain is Listeriolysin O (hly) from Listeria monocytogenes serotype 4a (strain HCC23).